A 602-amino-acid chain; its full sequence is Leishmanolysin (602 aa).

The signal sequence occupies residues 1–39 (MSVDSSSTHRRRCVAARLVRLAAAGAAVTVAVGTAAAWA). A propeptide spans 40–100 (HAGALQHRCV…DPRPGSARSV (61 aa)) (activation peptide). 2 disulfides stabilise this stretch: Cys125–Cys142 and Cys191–Cys230. His264 contacts Zn(2+). Glu265 is an active-site residue. A Zn(2+)-binding site is contributed by His268. Asn300 is a glycosylation site (N-linked (GlcNAc...) asparagine). Disulfide bonds link Cys314/Cys386, Cys393/Cys455, Cys406/Cys425, Cys415/Cys489, Cys466/Cys510, Cys515/Cys565, and Cys535/Cys558. His334 serves as a coordination point for Zn(2+). N-linked (GlcNAc...) asparagine glycosylation is present at Asn407. Asn534 carries N-linked (GlcNAc...) asparagine glycosylation. Residue Asn577 is the site of GPI-anchor amidated asparagine attachment. The propeptide at 578-602 (TAAGRRGPRAAATALLVAALLAVAL) is removed in mature form.

It belongs to the peptidase M8 family. Requires Zn(2+) as cofactor. In terms of processing, the phosphatidylinositol moiety of the GPI-anchor contains a fully saturated, unbranched 1-O-alkyl chain (mainly C24:0) and a mixture of fully saturated unbranched 2-O-acyl chains (C12:0, C14:0, C16:0, and C18:0).

It is found in the cell membrane. It catalyses the reaction Preference for hydrophobic residues at P1 and P1' and basic residues at P2' and P3'. A model nonapeptide is cleaved at -Ala-Tyr-|-Leu-Lys-Lys-.. Its function is as follows. Has an integral role during the infection of macrophages in the mammalian host. This chain is Leishmanolysin (gp63), found in Leishmania major.